A 96-amino-acid chain; its full sequence is uncharacterized protein (96 aa).

In terms of biological role, essential for virus function. This is an uncharacterized protein from Saccharolobus solfataricus (Sulfolobus solfataricus).